The following is a 670-amino-acid chain: UvrABC system protein B (670 aa).

Residues 26 to 183 (NGLKSGLAFQ…QRLVDLQYNR (158 aa)) form the Helicase ATP-binding domain. 39–46 (GVTGSGKT) contributes to the ATP binding site. Residues 92–115 (YYDYYQPEAYVPSSDSFIEKDAAI) carry the Beta-hairpin motif. The 167-residue stretch at 431–597 (QVDDLLSEIN…GLSKQVNDVM (167 aa)) folds into the Helicase C-terminal domain. The region spanning 630–665 (LKQIALSEKQMFACAKNLEFEKAALFRDEVTKLHEQ) is the UVR domain.

This sequence belongs to the UvrB family. As to quaternary structure, forms a heterotetramer with UvrA during the search for lesions. Interacts with UvrC in an incision complex.

It is found in the cytoplasm. In terms of biological role, the UvrABC repair system catalyzes the recognition and processing of DNA lesions. A damage recognition complex composed of 2 UvrA and 2 UvrB subunits scans DNA for abnormalities. Upon binding of the UvrA(2)B(2) complex to a putative damaged site, the DNA wraps around one UvrB monomer. DNA wrap is dependent on ATP binding by UvrB and probably causes local melting of the DNA helix, facilitating insertion of UvrB beta-hairpin between the DNA strands. Then UvrB probes one DNA strand for the presence of a lesion. If a lesion is found the UvrA subunits dissociate and the UvrB-DNA preincision complex is formed. This complex is subsequently bound by UvrC and the second UvrB is released. If no lesion is found, the DNA wraps around the other UvrB subunit that will check the other stand for damage. This chain is UvrABC system protein B, found in Psychromonas ingrahamii (strain DSM 17664 / CCUG 51855 / 37).